We begin with the raw amino-acid sequence, 930 residues long: uncharacterized protein (930 aa).

A Nuclear localization signal motif is present at residues Ile-434 to Lys-441.

It localises to the nucleus. This is an uncharacterized protein from Chaetomium thermophilum (strain DSM 1495 / CBS 144.50 / IMI 039719) (Thermochaetoides thermophila).